The following is a 147-amino-acid chain: MKKFYSCLPVFLLIGCAQVPLPSSVSKPVQQPGAQKEQLANANSIDECQSLPYVPSDLAKNKSLSNHNADNSASKNSAISSSIFCEKYKQTKEQALTFFQEHPQYMRSKEDEEQLMTEFKKVLLEPGSKNLSIYQTLLAAHERLQAL.

Residues 1 to 15 (MKKFYSCLPVFLLIG) form the signal peptide. Cys16 carries the N-palmitoyl cysteine lipid modification. Cys16 is lipidated: S-diacylglycerol cysteine.

This sequence belongs to the InvH family.

It localises to the cell outer membrane. Functionally, involved in the synthesis of the type III secretion system (T3SS), also called injectisome, which is used to inject bacterial effector proteins into eukaryotic host cells. Pilot protein that is required for the proper localization of the secretin InvG/SctC in the outer membrane. Necessary for efficient adherence and entry of these organisms into cultured epithelial cells. The sequence is that of SPI-1 type 3 secretion system pilotin from Salmonella typhimurium (strain SL1344).